A 548-amino-acid polypeptide reads, in one-letter code: Polynucleotide 5'-hydroxyl-kinase nol-9 (548 aa).

An ATP-binding site is contributed by 186-193 (GHKGAGKS).

It belongs to the Clp1 family. NOL9/GRC3 subfamily.

It is found in the nucleus. It localises to the nucleolus. In terms of biological role, polynucleotide 5'-kinase involved in rRNA processing. This is Polynucleotide 5'-hydroxyl-kinase nol-9 (nol-9) from Caenorhabditis briggsae.